Reading from the N-terminus, the 316-residue chain is Methionyl-tRNA formyltransferase (316 aa).

109 to 112 lines the (6S)-5,6,7,8-tetrahydrofolate pocket; that stretch reads SLLP.

It belongs to the Fmt family.

It carries out the reaction L-methionyl-tRNA(fMet) + (6R)-10-formyltetrahydrofolate = N-formyl-L-methionyl-tRNA(fMet) + (6S)-5,6,7,8-tetrahydrofolate + H(+). Its function is as follows. Attaches a formyl group to the free amino group of methionyl-tRNA(fMet). The formyl group appears to play a dual role in the initiator identity of N-formylmethionyl-tRNA by promoting its recognition by IF2 and preventing the misappropriation of this tRNA by the elongation apparatus. The chain is Methionyl-tRNA formyltransferase from Idiomarina loihiensis (strain ATCC BAA-735 / DSM 15497 / L2-TR).